The chain runs to 462 residues: A-type ATP synthase subunit B (462 aa).

The protein belongs to the ATPase alpha/beta chains family. Has multiple subunits with at least A(3), B(3), C, D, E, F, H, I and proteolipid K(x).

It is found in the cell membrane. Its function is as follows. Component of the A-type ATP synthase that produces ATP from ADP in the presence of a proton gradient across the membrane. The B chain is a regulatory subunit. The chain is A-type ATP synthase subunit B from Methanococcus maripaludis (strain DSM 14266 / JCM 13030 / NBRC 101832 / S2 / LL).